The following is a 27-amino-acid chain: Flagellar filament 31.5 kDa core protein (27 aa).

This sequence belongs to the bacterial flagellin family. In terms of assembly, the flagellum consists of an outer layer composed of repeating units of FlaA around a core that contains one or all of five antigenically related polypeptides.

Its subcellular location is the periplasmic flagellum. It is found in the periplasm. In terms of biological role, component of the core of the flagella. This Spirochaeta aurantia protein is Flagellar filament 31.5 kDa core protein.